The primary structure comprises 214 residues: tRNA (guanine-N(7)-)-methyltransferase (214 aa).

Residues E44, E69, D96, and D118 each coordinate S-adenosyl-L-methionine. D118 is an active-site residue. Substrate is bound by residues K122, D154, and 191–194 (TEYE).

Belongs to the class I-like SAM-binding methyltransferase superfamily. TrmB family.

The catalysed reaction is guanosine(46) in tRNA + S-adenosyl-L-methionine = N(7)-methylguanosine(46) in tRNA + S-adenosyl-L-homocysteine. The protein operates within tRNA modification; N(7)-methylguanine-tRNA biosynthesis. Its function is as follows. Catalyzes the formation of N(7)-methylguanine at position 46 (m7G46) in tRNA. The protein is tRNA (guanine-N(7)-)-methyltransferase of Listeria welshimeri serovar 6b (strain ATCC 35897 / DSM 20650 / CCUG 15529 / CIP 8149 / NCTC 11857 / SLCC 5334 / V8).